The following is a 4244-amino-acid chain: Tenascin-X (4244 aa).

The signal sequence occupies residues 1-23 (MMPAQYALTSSLVLLVLLSTARA). Residues 27 to 57 (SSRSNVTLPAPRPPPQPGGHTVGAGVGSPSS) are disordered. Asparagine 31 is a glycosylation site (N-linked (GlcNAc...) asparagine). An EGF-like 1; incomplete domain is found at 156–168 (CSCEPGWGGPTCS). The interval 169 to 189 (DPTDAEIPPSSPPSASGSCPD) is disordered. 18 EGF-like domains span residues 183 to 213 (ASGS…GPSC), 214 to 244 (GWPS…GPDC), 245 to 275 (SQRS…GDDC), 276 to 306 (GMRS…GEDC), 307 to 337 (GVRS…GEDC), 338 to 368 (GTRS…GEDC), 369 to 399 (STRT…GDDC), 400 to 430 (GVRS…GTDC), 431 to 461 (GSRA…GEDC), 462 to 492 (GVRS…GRDC), 493 to 523 (GTRA…GEDC), 524 to 554 (GSRR…GEDC), 555 to 585 (STRS…GEDC), 586 to 616 (GVRQ…SEDC), 617 to 647 (SIRT…GPTC), 648 to 679 (ATRM…EDCG), 684 to 714 (PASA…GPDC), and 715 to 746 (AIQT…EDCG). 54 disulfides stabilise this stretch: cysteine 187/cysteine 197, cysteine 191/cysteine 202, cysteine 204/cysteine 213, cysteine 218/cysteine 228, cysteine 222/cysteine 233, cysteine 235/cysteine 244, cysteine 249/cysteine 259, cysteine 253/cysteine 264, cysteine 266/cysteine 275, cysteine 280/cysteine 290, cysteine 284/cysteine 295, cysteine 297/cysteine 306, cysteine 311/cysteine 321, cysteine 315/cysteine 326, cysteine 328/cysteine 337, cysteine 342/cysteine 352, cysteine 346/cysteine 357, cysteine 359/cysteine 368, cysteine 373/cysteine 383, cysteine 377/cysteine 388, cysteine 390/cysteine 399, cysteine 404/cysteine 414, cysteine 408/cysteine 419, cysteine 421/cysteine 430, cysteine 435/cysteine 445, cysteine 439/cysteine 450, cysteine 452/cysteine 461, cysteine 466/cysteine 476, cysteine 470/cysteine 481, cysteine 483/cysteine 492, cysteine 497/cysteine 507, cysteine 501/cysteine 512, cysteine 514/cysteine 523, cysteine 528/cysteine 538, cysteine 532/cysteine 543, cysteine 545/cysteine 554, cysteine 559/cysteine 569, cysteine 563/cysteine 574, cysteine 576/cysteine 585, cysteine 590/cysteine 600, cysteine 594/cysteine 605, cysteine 607/cysteine 616, cysteine 621/cysteine 631, cysteine 625/cysteine 636, cysteine 638/cysteine 647, cysteine 652/cysteine 662, cysteine 656/cysteine 667, cysteine 669/cysteine 678, cysteine 688/cysteine 698, cysteine 692/cysteine 703, cysteine 705/cysteine 714, cysteine 719/cysteine 729, cysteine 723/cysteine 734, and cysteine 736/cysteine 745. The segment at 926-956 (TGSSPLGLLGTTDEPPPSGPSTTQGAQAPLL) is disordered. 10 Fibronectin type-III domains span residues 959–1051 (RPQE…IMDK), 1064–1153 (RLGE…PQSD), 1161–1249 (HLGN…APER), 1263–1352 (LLGE…PQED), 1374–1468 (LLGE…TPPA), 1476–1572 (RLGE…TEAS), 1574–1669 (PPLE…RGDA), 1674–1764 (PPRL…ARSA), 1778–1868 (LGEE…REET), and 1883–1971 (HLGE…VPEE). A disordered region spans residues 1340 to 1372 (PESVVAKTAPQEDVDETPSPTELGTEAPESPEE). A Cell attachment site motif is present at residues 1666 to 1668 (RGD). Residues 1752-1777 (PLTADGTTEARSAMDDTGTKRPPKPR) form a disordered region. Positions 1968-1990 (VPEEEKPSEPPTATPEPPIKPRL) are disordered. A compositionally biased stretch (pro residues) spans 1976-1987 (EPPTATPEPPIK). Fibronectin type-III domains are found at residues 1989-2089 (RLGE…SMEA), 2097-2185 (LLGE…APEE), 2196-2296 (RLGQ…TEPP), 2305-2398 (RLEE…TPSP), and 2408-2502 (PPEE…PQED). A disordered region spans residues 2281–2304 (APGKDEEMAPASTEPPTPEPPIKP). Residues 2495–2542 (GVTAPQEDVDETPSPTEPGTEAPGPPEEPLLGELTVTGSSPDSLSLSW) are disordered. Over residues 2506–2516 (TPSPTEPGTEA) the composition is skewed to low complexity. Fibronectin type-III domains lie at 2519 to 2617 (PPEE…TTQA), 2625 to 2723 (PPIK…TPSP), 2733 to 2840 (PPEE…TTPE), 2841 to 2939 (PPNK…TPAP), 2949 to 3042 (PPEE…APKD), 3062 to 3153 (RLGE…TPSP), 3168 to 3260 (LLGE…TPLP), 3264 to 3355 (RLGE…TKPS), 3357 to 3446 (RLGE…PLEK), 3451 to 3544 (HLGE…TPAP), 3553 to 3647 (PPEE…LAPA), 3657 to 3754 (RLSQ…TLSP), 3758 to 3847 (SPRD…VPDG), 3848 to 3934 (PTQL…TGLE), and 3935 to 4025 (APRD…LRIP). The span at 2530–2542 (VTGSSPDSLSLSW) shows a compositional bias: polar residues. 2 disordered regions span residues 2824–2847 (PEDE…KPRL) and 2933–2969 (EEET…DSLS). A compositionally biased stretch (low complexity) spans 2937 to 2946 (PAPTEPSTEA). A compositionally biased stretch (polar residues) spans 2960–2969 (VTGSSPDSLS). Disordered regions lie at residues 3536–3559 (APEE…EPRL) and 3636–3662 (LSAE…SQLS). N-linked (GlcNAc...) asparagine glycosylation is found at asparagine 3855, asparagine 3908, and asparagine 3920. The 216-residue stretch at 4021-4236 (GLRIPFPRDC…FTEMKLRPRN (216 aa)) folds into the Fibrinogen C-terminal domain. Cysteine 4030 and cysteine 4060 are joined by a disulfide. A glycan (N-linked (GlcNAc...) asparagine) is linked at asparagine 4095. A disulfide bridge connects residues cysteine 4182 and cysteine 4195.

Belongs to the tenascin family. As to quaternary structure, homotrimer. Interacts with type I, III and V collagens and tropoelastin via its 29th fibronectin type-III domain. As to expression, highly expressed in fetal adrenal, in fetal testis, fetal smooth, striated and cardiac muscle. Isoform XB-short is only expressed in the adrenal gland.

It is found in the secreted. The protein resides in the extracellular space. Its subcellular location is the extracellular matrix. Appears to mediate interactions between cells and the extracellular matrix. Substrate-adhesion molecule that appears to inhibit cell migration. Accelerates collagen fibril formation. May play a role in supporting the growth of epithelial tumors. The chain is Tenascin-X from Homo sapiens (Human).